Reading from the N-terminus, the 179-residue chain is Protein GrpE (179 aa).

Residues 1-10 (MSKKEEKQEE) show a composition bias toward basic and acidic residues. The disordered stretch occupies residues 1 to 23 (MSKKEEKQEELQEEMEAVDAAGV).

It belongs to the GrpE family. As to quaternary structure, homodimer.

Its subcellular location is the cytoplasm. Its function is as follows. Participates actively in the response to hyperosmotic and heat shock by preventing the aggregation of stress-denatured proteins, in association with DnaK and GrpE. It is the nucleotide exchange factor for DnaK and may function as a thermosensor. Unfolded proteins bind initially to DnaJ; upon interaction with the DnaJ-bound protein, DnaK hydrolyzes its bound ATP, resulting in the formation of a stable complex. GrpE releases ADP from DnaK; ATP binding to DnaK triggers the release of the substrate protein, thus completing the reaction cycle. Several rounds of ATP-dependent interactions between DnaJ, DnaK and GrpE are required for fully efficient folding. This is Protein GrpE from Enterococcus faecalis (strain ATCC 700802 / V583).